The sequence spans 550 residues: Metal transporter Nramp3 (550 aa).

Polar residues predominate over residues 1–26 (MSGPMQRSSQPQFISSVERNNQSNGP). The segment at 1 to 30 (MSGPMQRSSQPQFISSVERNNQSNGPGTPL) is disordered. A run of 12 helical transmembrane segments spans residues 50-70 (LFSY…PGNF), 83-103 (ELLW…SLAA), 127-147 (FILW…EVIG), 158-178 (IPVW…LLLQ), 185-205 (LEFL…VELG), 233-253 (ISLL…ALVL), 276-296 (AFAL…SGAV), 333-353 (LFAV…TYAG), 368-390 (WIRN…IIGG), 397-417 (LIII…VPLL), 435-455 (ISVI…YFLI), and 473-493 (VFSG…ILYL). Residues 523-550 (GEGSLGHLPREDISSMQLPQQRTASDLD) are disordered. Positions 536–550 (SSMQLPQQRTASDLD) are enriched in polar residues.

Belongs to the NRAMP (TC 2.A.55) family.

The protein resides in the membrane. In terms of biological role, probable metal transporter. The chain is Metal transporter Nramp3 (NRAMP3) from Oryza sativa subsp. japonica (Rice).